We begin with the raw amino-acid sequence, 99 residues long: Ferredoxin (99 aa).

Residues 4–96 (YKIHLLCEEE…DCTISTHVEQ (93 aa)) form the 2Fe-2S ferredoxin-type domain. [2Fe-2S] cluster is bound by residues Cys-42, Cys-47, Cys-50, and Cys-80.

This sequence belongs to the 2Fe2S plant-type ferredoxin family. As to quaternary structure, forms a complex with heterodimeric ferredoxin-thioredoxin reductase (FTR) and thioredoxin. The cofactor is [2Fe-2S] cluster.

It localises to the plastid. Its subcellular location is the chloroplast. Its function is as follows. Ferredoxins are iron-sulfur proteins that transfer electrons in a wide variety of metabolic reactions. The sequence is that of Ferredoxin (petF) from Pyropia yezoensis (Susabi-nori).